We begin with the raw amino-acid sequence, 234 residues long: MLQFKLVLLGDSSVGKSSIVHRFVKDTFDELRESTIGAAFLSQSITIHPNDGNETKDVVIKFEIWDTAGQERYKSLAPMYYRNANAALVVYDITQEDSLQKARNWVDELKNKVGDDDLVIYLLGNKVDLCQETPSTETSPDSNEGGDEEQKVRAISTEEAKQYAQEQGLLFREVSAKTGEGVKEIFQDIGEKLYDLKKDEILSKQNRQIGGGNNGQVDINLQRPSTNDPTSCCS.

GTP is bound by residues 10 to 17, 66 to 70, and 111 to 114; these read GDSSVGKS, DTAGQ, and NKVG. Disordered stretches follow at residues 131-151 and 206-234; these read QETP…EEQK and NRQI…SCCS. Positions 132 to 142 are enriched in polar residues; that stretch reads ETPSTETSPDS. Residues Ser-139 and Ser-142 each carry the phosphoserine modification. Residue Lys-151 forms a Glycyl lysine isopeptide (Lys-Gly) (interchain with G-Cter in ubiquitin) linkage. Positions 217–234 are enriched in polar residues; that stretch reads VDINLQRPSTNDPTSCCS. S-geranylgeranyl cysteine attachment occurs at residues Cys-232 and Cys-233.

It belongs to the small GTPase superfamily. Rab family. In terms of assembly, interacts with ROY1, YIF1, YIP3, YIP4 and YIP5.

Its subcellular location is the cell membrane. The protein localises to the endoplasmic reticulum. Required for transport in the endocytic pathway and for correct sorting of the vacuolar hydrolases suggesting a possible intersection of the endocytic with the vacuolar sorting pathway. May be involved in recruiting the MON1-CCZ1 complex to membranes enriched in phosphatidylinositol 3-phosphate (PtdIns[3]P) or other charged lipids, leading to recruitment of YPT7. The polypeptide is GTP-binding protein YPT52 (YPT52) (Saccharomyces cerevisiae (strain ATCC 204508 / S288c) (Baker's yeast)).